Here is a 1264-residue protein sequence, read N- to C-terminus: Regulator of G-protein signaling 22 (1264 aa).

The disordered stretch occupies residues E565–Q587. The segment covering S568 to K578 has biased composition (polar residues). RGS domains follow at residues K852–Q980 and A1021–N1145. Residues T1142–D1174 adopt a coiled-coil conformation.

In terms of assembly, interacts with GNA11, GNA12 and GNA13. As to expression, testis-specific. Expressed in Leydig cells and spermatogenic cells from the spermatogonia to spermatid stages (at protein level).

It localises to the cytoplasm. Its subcellular location is the nucleus. Functionally, inhibits signal transduction by increasing the GTPase activity of G protein alpha subunits thereby driving them into their inactive GDP-bound form. The polypeptide is Regulator of G-protein signaling 22 (RGS22) (Homo sapiens (Human)).